A 124-amino-acid polypeptide reads, in one-letter code: uncharacterized protein (124 aa).

This is an uncharacterized protein from Lactobacillus acidophilus.